The following is a 338-amino-acid chain: Ribonucleoside-diphosphate reductase small subunit (338 aa).

Asp-81, Glu-112, and His-115 together coordinate Fe cation. Tyr-119 is an active-site residue. Fe cation contacts are provided by Glu-174, Glu-208, and His-211.

This sequence belongs to the ribonucleoside diphosphate reductase small chain family. As to quaternary structure, heterodimer of a large and a small subunit. It depends on Fe cation as a cofactor.

It is found in the cytoplasm. It carries out the reaction a 2'-deoxyribonucleoside 5'-diphosphate + [thioredoxin]-disulfide + H2O = a ribonucleoside 5'-diphosphate + [thioredoxin]-dithiol. In terms of biological role, provides the precursors necessary for DNA synthesis. Catalyzes the biosynthesis of deoxyribonucleotides from the corresponding ribonucleotides. This Dictyostelium discoideum (Social amoeba) protein is Ribonucleoside-diphosphate reductase small subunit (rnrB-1).